We begin with the raw amino-acid sequence, 359 residues long: MVPNYSTEETVKRIHVDCPVSGRHSYIYIMVPTVYSIIFIIGIFGNSLVVIVIYCYMKLKTVASIFLLNLALADLCFLITLPLWAAYTAMEYQWPFGNCLCKLASAGISFNLYASVFLLTCLSIDRYLAIVHPVKSRIRRTMFVARVTCIVIWLLAGVASLPVIIHRNIFFAENLNMTVCGFRYDNNNTTLRVGLGLSKNLLGFLIPFLIILTSYTLIWKTLKKAYQIQRNKTRNDDIFKMIVAIVFFFFFSWIPHQVFTFLDVLIQLHVITDCKITDIVDTAMPFTICIAYFNNCLNPFFYVFFGKNFKKYFLQLIKYIPPNVSTHPSLTTKMSSLSYRPPENIRLPTKKTAGSFDAE.

At 1 to 25 (MVPNYSTEETVKRIHVDCPVSGRHS) the chain is on the extracellular side. Asparagine 4 carries N-linked (GlcNAc...) asparagine glycosylation. Aspartate 17 lines the angiotensin II pocket. Disulfide bonds link cysteine 18–cysteine 274 and cysteine 101–cysteine 180. Residues 26 to 55 (YIYIMVPTVYSIIFIIGIFGNSLVVIVIYC) traverse the membrane as a helical segment. Residues 56 to 61 (YMKLKT) lie on the Cytoplasmic side of the membrane. Residues 62-89 (VASIFLLNLALADLCFLITLPLWAAYTA) form a helical membrane-spanning segment. Topologically, residues 90–98 (MEYQWPFGN) are extracellular. The helical transmembrane segment at 99 to 125 (CLCKLASAGISFNLYASVFLLTCLSID) threads the bilayer. The Cytoplasmic segment spans residues 126-141 (RYLAIVHPVKSRIRRT). The helical transmembrane segment at 142–165 (MFVARVTCIVIWLLAGVASLPVII) threads the bilayer. Over 166–190 (HRNIFFAENLNMTVCGFRYDNNNTT) the chain is Extracellular. Arginine 167 provides a ligand contact to angiotensin II. Asparagine 176 carries N-linked (GlcNAc...) asparagine glycosylation. 2 residues coordinate angiotensin II: phenylalanine 182 and tyrosine 184. N-linked (GlcNAc...) asparagine glycans are attached at residues asparagine 187 and asparagine 188. A helical membrane pass occupies residues 191–216 (LRVGLGLSKNLLGFLIPFLIILTSYT). Lysine 199 is a binding site for angiotensin II. The Cytoplasmic segment spans residues 217 to 239 (LIWKTLKKAYQIQRNKTRNDDIF). The helical transmembrane segment at 240-268 (KMIVAIVFFFFFSWIPHQVFTFLDVLIQL) threads the bilayer. At 269 to 278 (HVITDCKITD) the chain is on the extracellular side. A helical transmembrane segment spans residues 279–304 (IVDTAMPFTICIAYFNNCLNPFFYVF). Topologically, residues 305 to 359 (FGKNFKKYFLQLIKYIPPNVSTHPSLTTKMSSLSYRPPENIRLPTKKTAGSFDAE) are cytoplasmic.

The protein belongs to the G-protein coupled receptor 1 family. C-terminal Ser or Thr residues may be phosphorylated.

The protein localises to the cell membrane. Functionally, receptor for angiotensin II, a vasoconstricting peptide, which acts as a key regulator of blood pressure and sodium retention by the kidney. The activated receptor in turn couples to G-alpha proteins G(q) (GNAQ, GNA11, GNA14 or GNA15) and thus activates phospholipase C and increases the cytosolic Ca(2+) concentrations, which in turn triggers cellular responses such as stimulation of protein kinase C. The polypeptide is Type-1 angiotensin II receptor (AGTR1) (Gallus gallus (Chicken)).